The sequence spans 238 residues: uncharacterized protein (238 aa).

It to M.thermoautotrophicum MTH564.

This is an uncharacterized protein from Methanocaldococcus jannaschii (strain ATCC 43067 / DSM 2661 / JAL-1 / JCM 10045 / NBRC 100440) (Methanococcus jannaschii).